A 389-amino-acid chain; its full sequence is Pyruvate synthase subunit PorA (389 aa).

As to quaternary structure, heterotetramer of one alpha, one beta, one delta and one gamma chain.

It catalyses the reaction 2 oxidized [2Fe-2S]-[ferredoxin] + pyruvate + CoA = 2 reduced [2Fe-2S]-[ferredoxin] + acetyl-CoA + CO2 + H(+). In Methanocaldococcus jannaschii (strain ATCC 43067 / DSM 2661 / JAL-1 / JCM 10045 / NBRC 100440) (Methanococcus jannaschii), this protein is Pyruvate synthase subunit PorA (porA).